Reading from the N-terminus, the 826-residue chain is MSEEELNNRDTESKQEHDENNSNFEAGSAHMNLPVLPLREVIFFPGDYLPIFIGRKGSIQAMDKALAETSENTGRMLLIAQKNPKKEIPEGKDLYEVGVIAKIAEPKINLQDGGVKLMVIVECRARAVNFRKSEGVLEADVLPIEEEESDNVDIEAYRRAVVQNFEKCVKLSETIPDEIIGLLSQIDSTSRIADLVTASINLKLSVKQEILETVDLLERIKKVHALLEKELGVLQVKQQIKEKTESQIKKSHKVYLLNEQLKAITKELYDKEGEEYDELVDLEKKIGNGKLSAEAKEKVSKELKKLKNMVPMSAEATVVRNYVDWIISLPWKKKGKMITDIAASERILKASHYGIEKVKERIIEYLAVQNRTKSFKGSILCLLGPPGVGKTSLASAIAEATGRPFVRMSLGGIKDESEIKGHRRTYIGAMPGKIIQHMKKAKLSNPVFLLDEIDKMSSDFRSDPAFALLEVLDPEQNAHFVDHYLEVEYDLSDVMFVATANSLNMIPALLDRLEIIRLEAYSEEEKLQIAEHYLIGKLQREHGLKKSEWSISKEALKLLIRRYTRESGVRNLKRELANLMRKAVKKLGVQSGLKSIEVSVKNLKKYAGVEKYTFGTAEPENLVGMTTGLAYTQTGGDLIMIEAVLLPGKGEIRSTGKLGEVMQESVQAAYSFVCSNCNKFGFTSKFFKSKDVHLHVPEGATSKDGPSAGVAICTSIVSVMTGIPVRSNVAMTGEVSLRGKVMEIGGLKEKLLAAVRGGIKIVLIPASNEKDLENIPKSVKNAVRIIPVSTVSEALTFTLAEQPTPLAVDVWPDIPLSSTQQSEQRV.

A compositionally biased stretch (basic and acidic residues) spans 1–20 (MSEEELNNRDTESKQEHDEN). The segment at 1-27 (MSEEELNNRDTESKQEHDENNSNFEAG) is disordered. The Lon N-terminal domain maps to 33 to 231 (LPVLPLREVI…KVHALLEKEL (199 aa)). Residue 384-391 (GPPGVGKT) participates in ATP binding. Residues 620-801 (ENLVGMTTGL…SEALTFTLAE (182 aa)) enclose the Lon proteolytic domain. Active-site residues include Ser-707 and Lys-750.

Belongs to the peptidase S16 family. In terms of assembly, homohexamer. Organized in a ring with a central cavity.

It localises to the cytoplasm. The enzyme catalyses Hydrolysis of proteins in presence of ATP.. ATP-dependent serine protease that mediates the selective degradation of mutant and abnormal proteins as well as certain short-lived regulatory proteins. Required for cellular homeostasis and for survival from DNA damage and developmental changes induced by stress. Degrades polypeptides processively to yield small peptide fragments that are 5 to 10 amino acids long. Binds to DNA in a double-stranded, site-specific manner. The chain is Lon protease from Neorickettsia sennetsu (strain ATCC VR-367 / Miyayama) (Ehrlichia sennetsu).